The primary structure comprises 443 residues: Zinc finger protein ZIC 1 (443 aa).

Residues 221–256 form a C2H2-type 1; atypical zinc finger; that stretch reads LICKWIEPEQLANPKKSCNKTFSTMHELVTHVTVEH. The segment at 265–292 adopts a C2H2-type 2; atypical zinc-finger fold; it reads HICVWEECPREGKPFKAKYKLINHIRVH. 3 C2H2-type zinc fingers span residues 298–322, 328–352, and 358–380; these read FPCP…KRTH, FKCE…MHVH, and YLCK…MKVH. Residues 371 to 433 form a disordered region; it reads SSLRKHMKVH…AVHHTSNHST (63 aa). The segment covering 383-396 has biased composition (low complexity); it reads SSQGSQPSPAASSG. Positions 397 to 413 are enriched in polar residues; it reads YESSTPPTIVSPSAENQ. The segment at 408 to 443 is negatively regulates transcriptional activity; that stretch reads PSAENQSTSSLSPSSSAVHHTSNHSTLSSNFNEWYV. Over residues 414–433 the composition is skewed to low complexity; sequence STSSLSPSSSAVHHTSNHST.

The protein belongs to the GLI C2H2-type zinc-finger protein family. In terms of tissue distribution, during early gastrula stages, widely expressed in the dorsal ectoderm. At mid-gastrula, expressed throughout the presumptive neural plate and at late gastrula, expression gradually diminishes in the dorsal midline and increases in the anterior folds. By early neurula stage, expression becomes restricted to the lateral edges of the neural plate, corresponding to the presumptive dorsal neural plate and neural crest, and in flanking ectoderm. In early tailbud stages (stages 22-23), expressed in the dorsal forebrain, midbrain and hindbrain. Subsequently expressed in the telencephalon and at the diencephalon/mesencephalon boundary. In the spinal cord, expression is restricted to the dorsal most region including the roof plate. Also expressed in the somites but not in eye vesicles. At larval stages, expressed mainly in the dorsal neural tube throughout its anteroposterior axis.

Its subcellular location is the nucleus. It is found in the cytoplasm. Functionally, transcriptional activator that induces expression of multiple genes including pax3, en2, snai2/slug, feb and a subset of wnt genes. Has multiple key roles in the regulation of neural induction and neurogenesis: acts as a neural competence factor, sensitizing the presumptive neuroectoderm to respond to subsequent neuralizing signals. Promotes both preplacodal cell fates and neural crest cell fates, two of the cell populations that arise from the neural plate border. Cooperates with pax3 in concert with wnt signaling to determine neural crest fate. Synergizes with the bmp-inhibitor noggin/nog and acts through the wnt pathway to induce expression of en2. May bind to the minimal GLI-consensus sequence 5'-TGGGTGGTC-3'. The sequence is that of Zinc finger protein ZIC 1 (zic1) from Xenopus laevis (African clawed frog).